A 31-amino-acid polypeptide reads, in one-letter code: Conotoxin pc6b (31 aa).

Cystine bridges form between cysteine 2-cysteine 20, cysteine 9-cysteine 25, and cysteine 19-cysteine 29.

Belongs to the conotoxin O1 superfamily. Expressed by the venom duct.

It is found in the secreted. The polypeptide is Conotoxin pc6b (Conus pictus (Cone snail)).